The chain runs to 454 residues: Bifunctional protein GlmU (454 aa).

The pyrophosphorylase stretch occupies residues 1 to 229 (MQRYAVVLAA…FDEIMGVNDR (229 aa)). UDP-N-acetyl-alpha-D-glucosamine is bound by residues 8–11 (LAAG), Lys-22, Gln-72, and 77–78 (GT). Asp-102 serves as a coordination point for Mg(2+). The UDP-N-acetyl-alpha-D-glucosamine site is built by Gly-139, Glu-154, and Asn-227. Residue Asn-227 coordinates Mg(2+). The interval 230-250 (VALSKAEQAMRQRINEYHMRN) is linker. An N-acetyltransferase region spans residues 251 to 454 (GVTLIDPSST…KPGYLNKNKE (204 aa)). UDP-N-acetyl-alpha-D-glucosamine contacts are provided by Arg-332 and Lys-350. The active-site Proton acceptor is the His-362. Tyr-365 and Asn-376 together coordinate UDP-N-acetyl-alpha-D-glucosamine. Residues 385 to 386 (NY), Ala-422, and Arg-439 each bind acetyl-CoA.

It in the N-terminal section; belongs to the N-acetylglucosamine-1-phosphate uridyltransferase family. This sequence in the C-terminal section; belongs to the transferase hexapeptide repeat family. In terms of assembly, homotrimer. Mg(2+) is required as a cofactor.

It is found in the cytoplasm. The enzyme catalyses alpha-D-glucosamine 1-phosphate + acetyl-CoA = N-acetyl-alpha-D-glucosamine 1-phosphate + CoA + H(+). It carries out the reaction N-acetyl-alpha-D-glucosamine 1-phosphate + UTP + H(+) = UDP-N-acetyl-alpha-D-glucosamine + diphosphate. The protein operates within nucleotide-sugar biosynthesis; UDP-N-acetyl-alpha-D-glucosamine biosynthesis; N-acetyl-alpha-D-glucosamine 1-phosphate from alpha-D-glucosamine 6-phosphate (route II): step 2/2. It functions in the pathway nucleotide-sugar biosynthesis; UDP-N-acetyl-alpha-D-glucosamine biosynthesis; UDP-N-acetyl-alpha-D-glucosamine from N-acetyl-alpha-D-glucosamine 1-phosphate: step 1/1. It participates in bacterial outer membrane biogenesis; LPS lipid A biosynthesis. Its function is as follows. Catalyzes the last two sequential reactions in the de novo biosynthetic pathway for UDP-N-acetylglucosamine (UDP-GlcNAc). The C-terminal domain catalyzes the transfer of acetyl group from acetyl coenzyme A to glucosamine-1-phosphate (GlcN-1-P) to produce N-acetylglucosamine-1-phosphate (GlcNAc-1-P), which is converted into UDP-GlcNAc by the transfer of uridine 5-monophosphate (from uridine 5-triphosphate), a reaction catalyzed by the N-terminal domain. The sequence is that of Bifunctional protein GlmU from Staphylococcus carnosus (strain TM300).